Here is a 315-residue protein sequence, read N- to C-terminus: GTP cyclohydrolase MptA (315 aa).

The protein belongs to the GTP cyclohydrolase IV family. In terms of assembly, homodimer. Fe(2+) is required as a cofactor.

It carries out the reaction GTP + H2O = 7,8-dihydroneopterin 2',3'-cyclic phosphate + formate + diphosphate + H(+). Its pathway is cofactor biosynthesis; 5,6,7,8-tetrahydromethanopterin biosynthesis. Converts GTP to 7,8-dihydro-D-neopterin 2',3'-cyclic phosphate, the first intermediate in the biosynthesis of coenzyme methanopterin. This chain is GTP cyclohydrolase MptA, found in Methanococcus maripaludis (strain C5 / ATCC BAA-1333).